Here is a 128-residue protein sequence, read N- to C-terminus: 3-aminoacrylate deaminase RutC (128 aa).

It belongs to the RutC family. In terms of assembly, homotrimer.

The catalysed reaction is (Z)-3-aminoacrylate + H2O + H(+) = 3-oxopropanoate + NH4(+). Its function is as follows. Involved in pyrimidine catabolism. Catalyzes the deamination of 3-aminoacrylate to malonic semialdehyde, a reaction that can also occur spontaneously. RutC may facilitate the reaction and modulate the metabolic fitness, rather than catalyzing essential functions. This Shigella flexneri serotype X (strain 2002017) protein is 3-aminoacrylate deaminase RutC.